A 289-amino-acid chain; its full sequence is 2-hydroxy-6-oxononadienedioate/2-hydroxy-6-oxononatrienedioate hydrolase (289 aa).

H269 serves as the catalytic Proton acceptor.

Belongs to the AB hydrolase superfamily. MhpC family. As to quaternary structure, homodimer.

The enzyme catalyses (2Z,4E)-2-hydroxy-6-oxonona-2,4-dienedioate + H2O = (2Z)-2-hydroxypenta-2,4-dienoate + succinate + H(+). It carries out the reaction (2Z,4E,7E)-2-hydroxy-6-oxonona-2,4,7-trienedioate + H2O = (2Z)-2-hydroxypenta-2,4-dienoate + fumarate + H(+). The protein operates within aromatic compound metabolism; 3-phenylpropanoate degradation. Its function is as follows. Catalyzes the cleavage of the C5-C6 bond of 2-hydroxy-6-oxononadienedioate and 2-hydroxy-6-oxononatrienedioate, a dienol ring fission product of the bacterial meta-cleavage pathway for degradation of phenylpropionic acid. The protein is 2-hydroxy-6-oxononadienedioate/2-hydroxy-6-oxononatrienedioate hydrolase of Cupriavidus pinatubonensis (strain JMP 134 / LMG 1197) (Cupriavidus necator (strain JMP 134)).